The primary structure comprises 318 residues: Isoaspartyl peptidase/L-asparaginase (318 aa).

The Nucleophile role is filled by T180. Substrate-binding positions include 208–211 (RVSD) and 229–232 (TGIG).

The protein belongs to the Ntn-hydrolase family. As to quaternary structure, heterotetramer of two alpha and two beta chains arranged as a dimer of alpha/beta heterodimers. Post-translationally, cleaved into an alpha and beta chain by autocatalysis; this activates the enzyme. The N-terminal residue of the beta subunit is responsible for the nucleophile hydrolase activity.

It catalyses the reaction Cleavage of a beta-linked Asp residue from the N-terminus of a polypeptide.. Its function is as follows. Degrades proteins damaged by L-isoaspartyl residue formation (also known as beta-Asp residues). Probably performs the final step in the degradation of the reserve polymer cyanophycin (depolymerizes the building block L-beta-Asp-Arg). Also has L-asparaginase activity. This chain is Isoaspartyl peptidase/L-asparaginase, found in Nostoc sp. (strain PCC 7120 / SAG 25.82 / UTEX 2576).